Consider the following 415-residue polypeptide: Serine--tRNA ligase (415 aa).

231–233 (TAE) serves as a coordination point for L-serine. 262-264 (RSE) serves as a coordination point for ATP. An L-serine-binding site is contributed by Glu285. 349–352 (EISS) contacts ATP. Ser383 lines the L-serine pocket.

The protein belongs to the class-II aminoacyl-tRNA synthetase family. Type-1 seryl-tRNA synthetase subfamily. As to quaternary structure, homodimer. The tRNA molecule binds across the dimer.

It is found in the cytoplasm. It catalyses the reaction tRNA(Ser) + L-serine + ATP = L-seryl-tRNA(Ser) + AMP + diphosphate + H(+). The enzyme catalyses tRNA(Sec) + L-serine + ATP = L-seryl-tRNA(Sec) + AMP + diphosphate + H(+). The protein operates within aminoacyl-tRNA biosynthesis; selenocysteinyl-tRNA(Sec) biosynthesis; L-seryl-tRNA(Sec) from L-serine and tRNA(Sec): step 1/1. Its function is as follows. Catalyzes the attachment of serine to tRNA(Ser). Is also able to aminoacylate tRNA(Sec) with serine, to form the misacylated tRNA L-seryl-tRNA(Sec), which will be further converted into selenocysteinyl-tRNA(Sec). In Helicobacter pylori (strain P12), this protein is Serine--tRNA ligase.